Reading from the N-terminus, the 276-residue chain is Dermonecrotic toxin LdSicTox-alphaIB2 (276 aa).

Residue His5 is part of the active site. Residues Glu25 and Asp27 each contribute to the Mg(2+) site. Catalysis depends on His41, which acts as the Nucleophile. 2 disulfides stabilise this stretch: Cys45/Cys51 and Cys47/Cys190. Asp85 lines the Mg(2+) pocket. Asn253 is a glycosylation site (N-linked (GlcNAc...) asparagine).

It belongs to the arthropod phospholipase D family. Class II subfamily. Mg(2+) is required as a cofactor. In terms of tissue distribution, expressed by the venom gland.

It is found in the secreted. It catalyses the reaction an N-(acyl)-sphingosylphosphocholine = an N-(acyl)-sphingosyl-1,3-cyclic phosphate + choline. The enzyme catalyses an N-(acyl)-sphingosylphosphoethanolamine = an N-(acyl)-sphingosyl-1,3-cyclic phosphate + ethanolamine. The catalysed reaction is a 1-acyl-sn-glycero-3-phosphocholine = a 1-acyl-sn-glycero-2,3-cyclic phosphate + choline. It carries out the reaction a 1-acyl-sn-glycero-3-phosphoethanolamine = a 1-acyl-sn-glycero-2,3-cyclic phosphate + ethanolamine. In terms of biological role, dermonecrotic toxins cleave the phosphodiester linkage between the phosphate and headgroup of certain phospholipids (sphingolipid and lysolipid substrates), forming an alcohol (often choline) and a cyclic phosphate. This toxin acts on sphingomyelin (SM). It may also act on ceramide phosphoethanolamine (CPE), lysophosphatidylcholine (LPC) and lysophosphatidylethanolamine (LPE), but not on lysophosphatidylserine (LPS), and lysophosphatidylglycerol (LPG). It acts by transphosphatidylation, releasing exclusively cyclic phosphate products as second products. Induces dermonecrosis, hemolysis, increased vascular permeability, edema, inflammatory response, and platelet aggregation. The protein is Dermonecrotic toxin LdSicTox-alphaIB2 of Loxosceles deserta (Desert recluse spider).